The following is a 132-amino-acid chain: D-ribose pyranase (132 aa).

The active-site Proton donor is His20. Residues Asp28, His98, and 120–122 contribute to the substrate site; that span reads YAN.

The protein belongs to the RbsD / FucU family. RbsD subfamily. In terms of assembly, homodecamer.

Its subcellular location is the cytoplasm. It carries out the reaction beta-D-ribopyranose = beta-D-ribofuranose. The protein operates within carbohydrate metabolism; D-ribose degradation; D-ribose 5-phosphate from beta-D-ribopyranose: step 1/2. Its function is as follows. Catalyzes the interconversion of beta-pyran and beta-furan forms of D-ribose. This is D-ribose pyranase from Geobacillus thermodenitrificans (strain NG80-2).